Consider the following 435-residue polypeptide: 5-methylthioadenosine/S-adenosylhomocysteine deaminase (435 aa).

H65 and H67 together coordinate Zn(2+). Substrate is bound by residues E94, R150, and H189. H216 is a Zn(2+) binding site. The substrate site is built by E219 and D304. D304 provides a ligand contact to Zn(2+).

Belongs to the metallo-dependent hydrolases superfamily. MTA/SAH deaminase family. The cofactor is Zn(2+).

The enzyme catalyses S-adenosyl-L-homocysteine + H2O + H(+) = S-inosyl-L-homocysteine + NH4(+). It carries out the reaction S-methyl-5'-thioadenosine + H2O + H(+) = S-methyl-5'-thioinosine + NH4(+). In terms of biological role, catalyzes the deamination of 5-methylthioadenosine and S-adenosyl-L-homocysteine into 5-methylthioinosine and S-inosyl-L-homocysteine, respectively. Is also able to deaminate adenosine. The chain is 5-methylthioadenosine/S-adenosylhomocysteine deaminase from Bacillus cereus (strain 03BB102).